The following is a 543-amino-acid chain: Probable protein kinase UbiB (543 aa).

In terms of domain architecture, Protein kinase spans 123-501 (DFDSQALASA…GSRQGRARYL (379 aa)). Residues 129–137 (LASASIAQV) and K152 contribute to the ATP site. The Proton acceptor role is filled by D287. Residues 517–537 (MVNIALWPIGLYVAGGVIWLA) form a helical membrane-spanning segment.

It belongs to the ABC1 family. UbiB subfamily.

It localises to the cell inner membrane. Its pathway is cofactor biosynthesis; ubiquinone biosynthesis [regulation]. Is probably a protein kinase regulator of UbiI activity which is involved in aerobic coenzyme Q (ubiquinone) biosynthesis. The chain is Probable protein kinase UbiB from Edwardsiella ictaluri (strain 93-146).